The following is an 893-amino-acid chain: UPF0182 protein CLI_0022 (893 aa).

7 consecutive transmembrane segments (helical) span residues 9-29, 49-69, 94-114, 154-174, 202-222, 246-266, and 273-293; these read IPLF…NFII, AIII…WMYY, LFFI…SSSY, VIIS…FILE, LAIV…IKIW, FYKI…LSIV, and VSIC…ASFL.

This sequence belongs to the UPF0182 family.

Its subcellular location is the cell membrane. The polypeptide is UPF0182 protein CLI_0022 (Clostridium botulinum (strain Langeland / NCTC 10281 / Type F)).